Here is a 308-residue protein sequence, read N- to C-terminus: Apolipoprotein E (308 aa).

Positions 1-18 are cleaved as a signal peptide; sequence MKFLWAALVVTLLAGCRA. A run of 8 repeats spans residues 75–96, 97–118, 119–140, 141–162, 163–184, 185–206, 207–224, and 225–246. Residues 75-246 are 8 X 22 AA approximate tandem repeats; it reads LLIEETMKEV…RLDDMRDQME (172 aa). The interval 153 to 163 is LDL and other lipoprotein receptors binding; that stretch reads HLRKLRKRLLR. 157 to 160 lines the heparin pocket; that stretch reads LRKR. The segment at 205-281 is lipid-binding and lipoprotein association; the sequence is AIPPSQQLRE…SWFEPLVQDM (77 aa). 220 to 227 contacts heparin; that stretch reads GQKVRGRL. The segment at 257 to 308 is homooligomerization; it reads SQVRLQAEAFQTRLKSWFEPLVQDMQRQWASLVEKVQSTLGISPSTKPSKTK. The tract at residues 269-281 is specificity for association with VLDL; it reads RLKSWFEPLVQDM.

It belongs to the apolipoprotein A1/A4/E family. As to quaternary structure, homotetramer. May interact with ABCA1; functionally associated with ABCA1 in the biogenesis of HDLs. May interact with APP/A4 amyloid-beta peptide; the interaction is extremely stable in vitro but its physiological significance is unclear. May interact with MAPT. May interact with MAP2. In the cerebrospinal fluid, interacts with secreted SORL1. Interacts with PMEL; this allows the loading of PMEL luminal fragment on ILVs to induce fibril nucleation. Post-translationally, APOE exists as multiple glycosylated and sialylated glycoforms within cells and in plasma. The extent of glycosylation and sialylation are tissue and context specific. Glycated in plasma VLDL. In terms of processing, phosphorylated by FAM20C in the extracellular medium.

It is found in the secreted. Its subcellular location is the extracellular space. The protein localises to the extracellular matrix. It localises to the extracellular vesicle. The protein resides in the endosome. It is found in the multivesicular body. APOE is an apolipoprotein, a protein associating with lipid particles, that mainly functions in lipoprotein-mediated lipid transport between organs via the plasma and interstitial fluids. APOE is a core component of plasma lipoproteins and is involved in their production, conversion and clearance. Apolipoproteins are amphipathic molecules that interact both with lipids of the lipoprotein particle core and the aqueous environment of the plasma. As such, APOE associates with chylomicrons, chylomicron remnants, very low density lipoproteins (VLDL) and intermediate density lipoproteins (IDL) but shows a preferential binding to high-density lipoproteins (HDL). It also binds a wide range of cellular receptors including the LDL receptor/LDLR and the very low-density lipoprotein receptor/VLDLR that mediate the cellular uptake of the APOE-containing lipoprotein particles. Finally, APOE also has a heparin-binding activity and binds heparan-sulfate proteoglycans on the surface of cells, a property that supports the capture and the receptor-mediated uptake of APOE-containing lipoproteins by cells. The sequence is that of Apolipoprotein E (APOE) from Pteropus vampyrus (Large flying fox).